A 476-amino-acid polypeptide reads, in one-letter code: UDP-N-acetylmuramate--L-alanine ligase (476 aa).

123 to 129 (GTHGKTT) is an ATP binding site.

The protein belongs to the MurCDEF family.

Its subcellular location is the cytoplasm. It carries out the reaction UDP-N-acetyl-alpha-D-muramate + L-alanine + ATP = UDP-N-acetyl-alpha-D-muramoyl-L-alanine + ADP + phosphate + H(+). It functions in the pathway cell wall biogenesis; peptidoglycan biosynthesis. Functionally, cell wall formation. The sequence is that of UDP-N-acetylmuramate--L-alanine ligase from Nitrosococcus oceani (strain ATCC 19707 / BCRC 17464 / JCM 30415 / NCIMB 11848 / C-107).